We begin with the raw amino-acid sequence, 927 residues long: MRIKDTLNLGKTKFKMRGNLPVREAEWEKEWEDNHLYEQRLKLNEGHPRFDLHDGPPFANGNIHMGHALNKISKDIIVRYKNMNGYYAPYVPGWDTHGLPVEQQLAKKGIDRKTMDRAKYRELCRQYAEEQVQKQMTDFKRLGVMADWDNPYITLQHEFEGQEIRVFGEMYKKGYIYKGKKPVYWSWSSESTLAEAEVEYKDVEANSIFVAFPVVDSKGIIDPKDTYFVIWTTTPWTIPANEAICVNPKFDYSVVQVGDKKYVVATGLLDKVAEEIGWDDYKVVQTVKGADMEYMKAKHPLYDKESLVTEGFHVTLDDGTGLVHTAPGFGADDFNVGQKYDLPVFSPVDAHGRYTDEVPELEGMFYQDVDKLMVEKLKDAGALLKLKVFTHSYPHDWRTKKPVIFRATTQWFASIAPFRDQILEQIDNAKFIPSWGKTRLYNMIKDRGDWVISRQRAWGVPLPIFYAEDGTPIVTPETIEHIAEIFDKEGSNAWYTHTAKELLPEGFTSEHSPNGEFTKEKDILDVWFDSGSSWSGVMEKRDGLHYPADLYLEGSDQYRGWFNSSLITSVAVTGKAPYKEVLSQGFVLDDKGHKMSKSLGNVISPNDVIKRMGAEIIRLWVAQADTTSDVAVSMGILQQSAESYRKIRNTFRYMLANTSDFDPKENGVAYDDLRSVDQYMEIKLNDLVAECLAAYDKFDFTTVFKKIFNFISNDLSAFYLDFAKDVLYIEGKNSLERRSMQTVIYDAAVKLTKILTPILPHTMEEIWGFLKEPEDYVQLANMPKVENYTNHDELLENWGKFMNLRDDVLKALEDARNKKLIGKSFEAAVTIYPDKETKAMLDDLDADFRQILIVSKLTIVDGEAPENAEKLNNASIVVEHAEGEVCPRCRMIRTDIGEDPKLPELCERCAKIVEEDFPEAAQEGLEE.

The 'HIGH' region motif lies at 57-67; it reads PFANGNIHMGH. Glutamate 553 lines the L-isoleucyl-5'-AMP pocket. Residues 594-598 carry the 'KMSKS' region motif; that stretch reads KMSKS. Position 597 (lysine 597) interacts with ATP. Cysteine 886, cysteine 889, cysteine 906, and cysteine 909 together coordinate Zn(2+).

The protein belongs to the class-I aminoacyl-tRNA synthetase family. IleS type 1 subfamily. In terms of assembly, monomer. Zn(2+) is required as a cofactor.

The protein localises to the cytoplasm. The enzyme catalyses tRNA(Ile) + L-isoleucine + ATP = L-isoleucyl-tRNA(Ile) + AMP + diphosphate. Catalyzes the attachment of isoleucine to tRNA(Ile). As IleRS can inadvertently accommodate and process structurally similar amino acids such as valine, to avoid such errors it has two additional distinct tRNA(Ile)-dependent editing activities. One activity is designated as 'pretransfer' editing and involves the hydrolysis of activated Val-AMP. The other activity is designated 'posttransfer' editing and involves deacylation of mischarged Val-tRNA(Ile). The polypeptide is Isoleucine--tRNA ligase (Lactobacillus acidophilus (strain ATCC 700396 / NCK56 / N2 / NCFM)).